A 244-amino-acid polypeptide reads, in one-letter code: Ureidoacrylate amidohydrolase RutB (244 aa).

The active-site Proton acceptor is Asp-38. Lys-147 is a catalytic residue. The active-site Nucleophile is Cys-180.

The protein belongs to the isochorismatase family. RutB subfamily.

The enzyme catalyses (Z)-3-ureidoacrylate + H2O + H(+) = (Z)-3-aminoacrylate + NH4(+) + CO2. The catalysed reaction is (Z)-3-ureidoacrylate + H2O = (Z)-3-aminoacrylate + carbamate + H(+). It catalyses the reaction (Z)-2-methylureidoacrylate + H2O + H(+) = (Z)-2-methylaminoacrylate + NH4(+) + CO2. Hydrolyzes ureidoacrylate to form aminoacrylate and carbamate. The carbamate hydrolyzes spontaneously, thereby releasing one of the nitrogen atoms of the pyrimidine ring as ammonia and one of its carbon atoms as CO2. In Escherichia coli O6:H1 (strain CFT073 / ATCC 700928 / UPEC), this protein is Ureidoacrylate amidohydrolase RutB.